The primary structure comprises 585 residues: Efflux pump dotC (585 aa).

A compositionally biased stretch (basic and acidic residues) spans 1–34 (MSEDHTKADNLSEKDPHSPERSDSSSHEDAHARE). Positions 1-45 (MSEDHTKADNLSEKDPHSPERSDSSSHEDAHAREEEESSDDDGAL) are disordered. N10 is a glycosylation site (N-linked (GlcNAc...) asparagine). Residues 35–44 (EEESSDDDGA) are compositionally biased toward acidic residues. A helical transmembrane segment spans residues 51–71 (SLIAIVMIALSLIGLQLAVFL). N91 is a glycosylation site (N-linked (GlcNAc...) asparagine). Transmembrane regions (helical) follow at residues 94–114 (AAYT…TPIW), 132–152 (ALFM…MLIT), 158–178 (GAAG…LFSL), 186–206 (GMIG…GGAF), 214–234 (WCFY…FFFL), 247–267 (FAAI…MFLF), 280–300 (SATV…FGLV), 323–343 (ALLV…YLPL), 353–373 (PILA…SAAA), 385–405 (LIPM…LINF), 414–434 (LIIY…APLV), 449–471 (TATF…QVLY), and 524–544 (SPMW…ILLV). The tract at residues 564–585 (KKAEAERKAERQAKDLEKAQKS) is disordered.

This sequence belongs to the major facilitator superfamily. TCR/Tet family.

The protein resides in the cell membrane. The protein localises to the vacuole membrane. Efflux pump; part of the gene cluster that mediates the biosynthesis of dothistromin (DOTH), a polyketide toxin very similar in structure to the aflatoxin precursor, versicolorin B. One function of dotC may be to transport early-stage dothistromin biosynthetic intermediates from the cytoplasm into vacuoles, thereby affecting the rate of dothistromin production. The sequence is that of Efflux pump dotC from Dothistroma septosporum (Red band needle blight fungus).